The following is a 1068-amino-acid chain: Sucrose-phosphate synthase (1068 aa).

2 disordered regions span residues 18–47 (HTSSRGAGGGGGGGDPRSPTKAASPRGAHM) and 118–139 (KEQEQVRREATEDLAEDLSEGE). Residues 23–32 (GAGGGGGGGD) show a composition bias toward gly residues. A compositionally biased stretch (basic and acidic residues) spans 118–128 (KEQEQVRREAT).

This sequence belongs to the glycosyltransferase 1 family. In terms of assembly, homodimer or homotetramer.

It catalyses the reaction beta-D-fructose 6-phosphate + UDP-alpha-D-glucose = sucrose 6(F)-phosphate + UDP + H(+). Its pathway is glycan biosynthesis; sucrose biosynthesis; sucrose from D-fructose 6-phosphate and UDP-alpha-D-glucose: step 1/2. Its activity is regulated as follows. Activity is regulated by phosphorylation and moderated by concentration of metabolites and light. Plays a role in photosynthetic sucrose synthesis by catalyzing the rate-limiting step of sucrose biosynthesis from UDP-glucose and fructose- 6-phosphate. Involved in the regulation of carbon partitioning in the leaves of plants. May regulate the synthesis of sucrose and therefore play a major role as a limiting factor in the export of photoassimilates out of the leaf. Plays a role for sucrose availability that is essential for plant growth and fiber elongation. In Zea mays (Maize), this protein is Sucrose-phosphate synthase.